Consider the following 434-residue polypeptide: GTPase Der (434 aa).

EngA-type G domains follow at residues 3–167 (NIVA…PEIE) and 175–350 (PRFA…ESRS). GTP is bound by residues 9-16 (GRPNVGKS), 56-60 (DTGGY), 119-122 (NKVD), 181-188 (GRPNAGKS), 228-232 (DTAGI), and 293-296 (NKWD). Residues 351–434 (KKIKTRQFND…VPISIFFRKK (84 aa)) enclose the KH-like domain.

The protein belongs to the TRAFAC class TrmE-Era-EngA-EngB-Septin-like GTPase superfamily. EngA (Der) GTPase family. In terms of assembly, associates with the 50S ribosomal subunit.

Its function is as follows. GTPase that plays an essential role in the late steps of ribosome biogenesis. The sequence is that of GTPase Der from Christiangramia forsetii (strain DSM 17595 / CGMCC 1.15422 / KT0803) (Gramella forsetii).